The chain runs to 158 residues: Mitotic-spindle organizing protein 2B (158 aa).

At S34 the chain carries Phosphoserine. Residues 84–158 (RLASEPQDPA…PGKSPTRGST (75 aa)) are disordered. A compositionally biased stretch (low complexity) spans 111–122 (GSAALGGALALA). The span at 128–140 (EGSSQRMPRQPSA) shows a compositional bias: polar residues. S152 carries the post-translational modification Phosphoserine.

The protein belongs to the MOZART2 family. In terms of assembly, associates with the gamma-tubulin ring complex (gTuRC) consisting of TUBGCP2, TUBGCP3, TUBGCP4, TUBGCP5 and TUBGCP6 and gamma-tubulin TUBG1 or TUBG2; within the complex, interacts with TUBGCP2; the interaction plays a role in gTuRC activation. Interacts with TUBG1.

It localises to the cytoplasm. The protein resides in the cytoskeleton. The protein localises to the microtubule organizing center. It is found in the centrosome. Its subcellular location is the spindle. In terms of biological role, required for the recruitment and the assembly of the gamma-tubulin ring complex (gTuRC) at the centrosome. The gTuRC regulates the minus-end nucleation of alpha-beta tubulin heterodimers that grow into microtubule protafilaments, a critical step in centrosome duplication and spindle formation. This Homo sapiens (Human) protein is Mitotic-spindle organizing protein 2B (MZT2B).